A 189-amino-acid chain; its full sequence is Heme-binding protein 1 (189 aa).

The protein belongs to the HEBP family. In terms of assembly, monomer.

The protein localises to the cytoplasm. In terms of biological role, may bind free porphyrinogens that may be present in the cell and thus facilitate removal of these potentially toxic compound. Binds with a high affinity to one molecule of heme or porphyrins. It binds metalloporphyrins, free porphyrins and N-methylprotoporphyrin with similar affinities. The protein is Heme-binding protein 1 (HEBP1) of Sus scrofa (Pig).